Here is a 188-residue protein sequence, read N- to C-terminus: Small ribosomal subunit protein uS7 (188 aa).

This sequence belongs to the universal ribosomal protein uS7 family. In terms of assembly, part of the 30S ribosomal subunit.

One of the primary rRNA binding proteins, it binds directly to 16S rRNA where it nucleates assembly of the head domain of the 30S subunit. Is located at the subunit interface close to the decoding center. The chain is Small ribosomal subunit protein uS7 from Methanococcus maripaludis (strain C7 / ATCC BAA-1331).